Reading from the N-terminus, the 253-residue chain is Ribonuclease HII (253 aa).

The RNase H type-2 domain maps to 70-253 (NLIAGIDEVG…KSFEPIKSML (184 aa)). A divalent metal cation contacts are provided by Asp-76, Glu-77, and Asp-168.

Belongs to the RNase HII family. The cofactor is Mn(2+). Mg(2+) is required as a cofactor.

Its subcellular location is the cytoplasm. The enzyme catalyses Endonucleolytic cleavage to 5'-phosphomonoester.. Functionally, endonuclease that specifically degrades the RNA of RNA-DNA hybrids. This Streptococcus agalactiae serotype Ia (strain ATCC 27591 / A909 / CDC SS700) protein is Ribonuclease HII.